Here is a 95-residue protein sequence, read N- to C-terminus: MSVDAATVRRIAHLARIAVTEDEVPHLQGELNAMLAFVEQLSEVNVEGVEPMTSVTPMQMKKRADVVNDGEIADQVVANAPSTEDHFFLVPKVVE.

This sequence belongs to the GatC family. Heterotrimer of A, B and C subunits.

The enzyme catalyses L-glutamyl-tRNA(Gln) + L-glutamine + ATP + H2O = L-glutaminyl-tRNA(Gln) + L-glutamate + ADP + phosphate + H(+). It carries out the reaction L-aspartyl-tRNA(Asn) + L-glutamine + ATP + H2O = L-asparaginyl-tRNA(Asn) + L-glutamate + ADP + phosphate + 2 H(+). Functionally, allows the formation of correctly charged Asn-tRNA(Asn) or Gln-tRNA(Gln) through the transamidation of misacylated Asp-tRNA(Asn) or Glu-tRNA(Gln) in organisms which lack either or both of asparaginyl-tRNA or glutaminyl-tRNA synthetases. The reaction takes place in the presence of glutamine and ATP through an activated phospho-Asp-tRNA(Asn) or phospho-Glu-tRNA(Gln). The polypeptide is Aspartyl/glutamyl-tRNA(Asn/Gln) amidotransferase subunit C (Rhodopseudomonas palustris (strain ATCC BAA-98 / CGA009)).